Here is a 515-residue protein sequence, read N- to C-terminus: Probable cytosol aminopeptidase (515 aa).

Mn(2+) is bound by residues Lys279 and Asp284. Residue Lys291 is part of the active site. Residues Asp302, Asp361, and Glu363 each coordinate Mn(2+). The active site involves Arg365.

This sequence belongs to the peptidase M17 family. It depends on Mn(2+) as a cofactor.

It localises to the cytoplasm. It carries out the reaction Release of an N-terminal amino acid, Xaa-|-Yaa-, in which Xaa is preferably Leu, but may be other amino acids including Pro although not Arg or Lys, and Yaa may be Pro. Amino acid amides and methyl esters are also readily hydrolyzed, but rates on arylamides are exceedingly low.. The catalysed reaction is Release of an N-terminal amino acid, preferentially leucine, but not glutamic or aspartic acids.. In terms of biological role, presumably involved in the processing and regular turnover of intracellular proteins. Catalyzes the removal of unsubstituted N-terminal amino acids from various peptides. In Mycobacterium bovis (strain ATCC BAA-935 / AF2122/97), this protein is Probable cytosol aminopeptidase.